Consider the following 148-residue polypeptide: 3-dehydroquinate dehydratase (148 aa).

Y24 acts as the Proton acceptor in catalysis. Residues N80, H86, and D93 each coordinate substrate. Catalysis depends on H106, which acts as the Proton donor. Substrate contacts are provided by residues 107 to 108 (IS) and R117.

It belongs to the type-II 3-dehydroquinase family. Homododecamer.

The enzyme catalyses 3-dehydroquinate = 3-dehydroshikimate + H2O. It functions in the pathway metabolic intermediate biosynthesis; chorismate biosynthesis; chorismate from D-erythrose 4-phosphate and phosphoenolpyruvate: step 3/7. Functionally, catalyzes a trans-dehydration via an enolate intermediate. This chain is 3-dehydroquinate dehydratase, found in Acidovorax sp. (strain JS42).